The following is a 238-amino-acid chain: Cysteine-rich venom protein pseudechetoxin (238 aa).

The signal sequence occupies residues M1 to G19. The propeptide occupies T20–S27. One can recognise an SCP domain in the interval V38–Y164. Zn(2+)-binding residues include T51 and S106. Intrachain disulfides connect C75–C153, C92–C165, C148–C162, C184–C191, C187–C196, C200–C233, C209–C227, and C218–C231. In terms of domain architecture, ShKT spans C200–C233.

As to expression, expressed by the venom gland.

The protein localises to the secreted. In terms of biological role, blocks olfactory (CNGA2) and retinal (CNGA1) cyclic nucleotide-gated (CNG) ion channel currents. Does not inhibit retinal (CNGA3) currents. It forms high-affinity contacts with the pore turret region and most likely inhibits CNG channel current by blocking the external entrance to the transmembrane pore. Is really more potent that Pseudecin. Does not affect neither depolarization- nor caffeine-induced contraction arterial smooth muscle. The chain is Cysteine-rich venom protein pseudechetoxin from Pseudechis australis (Mulga snake).